A 112-amino-acid chain; its full sequence is Small ribosomal subunit protein bS6 (112 aa).

This sequence belongs to the bacterial ribosomal protein bS6 family.

Functionally, binds together with bS18 to 16S ribosomal RNA. The chain is Small ribosomal subunit protein bS6 (rpsF) from Chlamydia pneumoniae (Chlamydophila pneumoniae).